Here is a 196-residue protein sequence, read N- to C-terminus: Putative NADH dehydrogenase/NAD(P)H nitroreductase SCO5049 (196 aa).

It belongs to the nitroreductase family. HadB/RutE subfamily. FMN is required as a cofactor.

The sequence is that of Putative NADH dehydrogenase/NAD(P)H nitroreductase SCO5049 from Streptomyces coelicolor (strain ATCC BAA-471 / A3(2) / M145).